A 532-amino-acid chain; its full sequence is CTP synthase (532 aa).

The interval 1–267 is amidoligase domain; that stretch reads MAKFVFVTGG…HGLVLDQLQI (267 aa). Serine 13 serves as a coordination point for CTP. Serine 13 is a UTP binding site. 14 to 19 provides a ligand contact to ATP; that stretch reads GLGKGI. Residue tyrosine 54 participates in L-glutamine binding. Residue aspartate 71 participates in ATP binding. Aspartate 71 and glutamate 141 together coordinate Mg(2+). CTP contacts are provided by residues 148–150, 188–193, and lysine 224; these read DIE and KTKPIQ. Residues 188–193 and lysine 224 contribute to the UTP site; that span reads KTKPIQ. The Glutamine amidotransferase type-1 domain maps to 292 to 532; that stretch reads EVTFVGKYIE…GFVEAIVNNK (241 aa). Glycine 354 is a binding site for L-glutamine. Cysteine 381 serves as the catalytic Nucleophile; for glutamine hydrolysis. Residues 382 to 385, glutamate 405, and arginine 462 each bind L-glutamine; that span reads LGMQ. Residues histidine 507 and glutamate 509 contribute to the active site.

The protein belongs to the CTP synthase family. As to quaternary structure, homotetramer.

It catalyses the reaction UTP + L-glutamine + ATP + H2O = CTP + L-glutamate + ADP + phosphate + 2 H(+). It carries out the reaction L-glutamine + H2O = L-glutamate + NH4(+). The enzyme catalyses UTP + NH4(+) + ATP = CTP + ADP + phosphate + 2 H(+). It functions in the pathway pyrimidine metabolism; CTP biosynthesis via de novo pathway; CTP from UDP: step 2/2. Its activity is regulated as follows. Allosterically activated by GTP, when glutamine is the substrate; GTP has no effect on the reaction when ammonia is the substrate. The allosteric effector GTP functions by stabilizing the protein conformation that binds the tetrahedral intermediate(s) formed during glutamine hydrolysis. Inhibited by the product CTP, via allosteric rather than competitive inhibition. In terms of biological role, catalyzes the ATP-dependent amination of UTP to CTP with either L-glutamine or ammonia as the source of nitrogen. Regulates intracellular CTP levels through interactions with the four ribonucleotide triphosphates. This is CTP synthase from Mesoplasma florum (strain ATCC 33453 / NBRC 100688 / NCTC 11704 / L1) (Acholeplasma florum).